A 595-amino-acid polypeptide reads, in one-letter code: Thiol:disulfide interchange protein DsbD (595 aa).

A signal peptide spans 1-24 (MAQRFITLILLLCSVLLAPHSAQS). Cysteine 134 and cysteine 140 are oxidised to a cystine. Residues 166–186 (NSSATVNPPATTQPEGDATPV) are disordered. A run of 9 helical transmembrane segments spans residues 197–217 (ALLI…YPLI), 233–253 (ILIL…LLGL), 270–290 (YVLI…FGLY), 311–331 (GGSL…CSPC), 332–352 (TTAP…MLAG), 353–373 (GGTL…VTLF), 384–404 (WMQY…VFLL), 411–431 (VWGL…AFVL), and 435–455 (AHAG…LIVA). Cysteine 209 and cysteine 331 are disulfide-bonded. A Thioredoxin domain is found at 452-592 (LIVARPLQDW…FLQHLQNTPA (141 aa)). Cysteine 507 and cysteine 510 form a disulfide bridge.

This sequence belongs to the thioredoxin family. DsbD subfamily.

Its subcellular location is the cell inner membrane. It catalyses the reaction [protein]-dithiol + NAD(+) = [protein]-disulfide + NADH + H(+). It carries out the reaction [protein]-dithiol + NADP(+) = [protein]-disulfide + NADPH + H(+). Its function is as follows. Required to facilitate the formation of correct disulfide bonds in some periplasmic proteins and for the assembly of the periplasmic c-type cytochromes. Acts by transferring electrons from cytoplasmic thioredoxin to the periplasm. This transfer involves a cascade of disulfide bond formation and reduction steps. This chain is Thiol:disulfide interchange protein DsbD, found in Yersinia pestis bv. Antiqua (strain Nepal516).